Reading from the N-terminus, the 176-residue chain is Ribosome rescue factor SmrB (176 aa).

The region spanning 93 to 168 (LDLHGYRQSE…GDAALLVLID (76 aa)) is the Smr domain.

Belongs to the SmrB family. In terms of assembly, associates with collided ribosomes, but not with correctly translating polysomes.

Its function is as follows. Acts as a ribosome collision sensor. Detects stalled/collided disomes (pairs of ribosomes where the leading ribosome is stalled and a second ribosome has collided with it) and endonucleolytically cleaves mRNA at the 5' boundary of the stalled ribosome. Stalled/collided disomes form a new interface (primarily via the 30S subunits) that binds SmrB. Cleaved mRNA becomes available for tmRNA ligation, leading to ribosomal subunit dissociation and rescue of stalled ribosomes. This is Ribosome rescue factor SmrB from Shewanella sp. (strain W3-18-1).